Consider the following 322-residue polypeptide: uncharacterized protein (322 aa).

9 helical membrane passes run L5 to I25, I37 to T57, L71 to F91, M109 to I129, S153 to V173, L189 to I209, L245 to I265, P268 to V288, and I300 to L320.

It is found in the cell membrane. This is an uncharacterized protein from Methanocaldococcus jannaschii (strain ATCC 43067 / DSM 2661 / JAL-1 / JCM 10045 / NBRC 100440) (Methanococcus jannaschii).